A 119-amino-acid polypeptide reads, in one-letter code: Large ribosomal subunit protein bL19 (119 aa).

The protein belongs to the bacterial ribosomal protein bL19 family.

Functionally, this protein is located at the 30S-50S ribosomal subunit interface and may play a role in the structure and function of the aminoacyl-tRNA binding site. The polypeptide is Large ribosomal subunit protein bL19 (Limosilactobacillus fermentum (strain NBRC 3956 / LMG 18251) (Lactobacillus fermentum)).